A 562-amino-acid polypeptide reads, in one-letter code: Valerena-4,7(11)-diene synthase (562 aa).

Mg(2+) is bound by residues Asp314, Asp318, and Glu467. Positions Asp314 to Asp318 match the DDXXD motif motif.

Belongs to the terpene synthase family. Requires Mg(2+) as cofactor. As to expression, predominantly expressed in root.

It catalyses the reaction (2E,6E)-farnesyl diphosphate = valerena-4,7(11)-diene + diphosphate. In terms of biological role, catalyzes formation of valerena-4,7(11)-diene, one of the active ingredients responsible for the sedative effect extracted from Valeriana officinalis root. The sequence is that of Valerena-4,7(11)-diene synthase (TPS2) from Valeriana officinalis (Valerian).